We begin with the raw amino-acid sequence, 471 residues long: Cytidine and dCMP deaminase domain-containing protein 1 (471 aa).

The interval 1–27 (MAESNSWRSHRESDGNRSIPNGDDARN) is disordered. 2 consecutive CMP/dCMP-type deaminase domains span residues 57 to 153 (LWME…LLSE) and 312 to 460 (GVIR…KLNG). 4 residues coordinate Zn(2+): His99, Cys124, Cys127, and His393. Glu395 serves as the catalytic Proton donor. Cys421 and Cys424 together coordinate Zn(2+).

The protein belongs to the cytidine and deoxycytidylate deaminase family. Zn(2+) is required as a cofactor.

It carries out the reaction 2'-deoxycytidine + H2O + H(+) = 2'-deoxyuridine + NH4(+). The catalysed reaction is cytidine + H2O + H(+) = uridine + NH4(+). Functionally, catalyzes the deamination of cytidine and deoxycytidine into uridine and deoxyuridine, respectively. The polypeptide is Cytidine and dCMP deaminase domain-containing protein 1 (cdadc1) (Danio rerio (Zebrafish)).